The following is a 420-amino-acid chain: ATP phosphoribosyltransferase regulatory subunit (420 aa).

This sequence belongs to the class-II aminoacyl-tRNA synthetase family. HisZ subfamily. Heteromultimer composed of HisG and HisZ subunits.

Its subcellular location is the cytoplasm. It participates in amino-acid biosynthesis; L-histidine biosynthesis; L-histidine from 5-phospho-alpha-D-ribose 1-diphosphate: step 1/9. In terms of biological role, required for the first step of histidine biosynthesis. May allow the feedback regulation of ATP phosphoribosyltransferase activity by histidine. In Bacillus cereus (strain AH187), this protein is ATP phosphoribosyltransferase regulatory subunit.